Consider the following 356-residue polypeptide: Geranylgeranyl pyrophosphate synthase penG (356 aa).

The isopentenyl diphosphate site is built by lysine 83, arginine 86, and histidine 115. Aspartate 122 and aspartate 126 together coordinate Mg(2+). Arginine 131 contributes to the dimethylallyl diphosphate binding site. Arginine 132 is a binding site for isopentenyl diphosphate. Residues lysine 209, threonine 210, and glutamine 243 each coordinate dimethylallyl diphosphate. A Mg(2+)-binding site is contributed by aspartate 246. 3 residues coordinate dimethylallyl diphosphate: asparagine 250, lysine 260, and lysine 270.

It belongs to the FPP/GGPP synthase family. Mg(2+) is required as a cofactor.

It carries out the reaction isopentenyl diphosphate + dimethylallyl diphosphate = (2E)-geranyl diphosphate + diphosphate. The catalysed reaction is isopentenyl diphosphate + (2E)-geranyl diphosphate = (2E,6E)-farnesyl diphosphate + diphosphate. It catalyses the reaction isopentenyl diphosphate + (2E,6E)-farnesyl diphosphate = (2E,6E,10E)-geranylgeranyl diphosphate + diphosphate. The protein operates within secondary metabolite biosynthesis. Geranylgeranyl pyrophosphate synthase; part of the gene cluster that mediates the biosynthesis of the indole diterpenes penitrems. The geranylgeranyl diphosphate (GGPP) synthase ptmG catalyzes the first step in penitrem biosynthesis via conversion of farnesyl pyrophosphate and isopentyl pyrophosphate into geranylgeranyl pyrophosphate (GGPP). Condensation of indole-3-glycerol phosphate with GGPP by the prenyl transferase ptmC then forms 3-geranylgeranylindole (3-GGI). Epoxidation by the FAD-dependent monooxygenase ptmM leads to a epoxidized-GGI that is substrate of the terpene cyclase ptmB for cyclization to yield paspaline. Paspaline is subsequently converted to 13-desoxypaxilline by the cytochrome P450 monooxygenase ptmP, the latter being then converted to paxilline by the cytochrome P450 monooxygenase ptmQ. Paxilline is converted to beta-paxitriol via C-10 ketoreduction by the short-chain dehydrogenase ptmH which can be monoprenylated at the C-20 by the indole diterpene prenyltransferase ptmD. A two-step elimination (acetylation and elimination) process performed by the O-acetyltransferase ptmV and ptmI leads to the production of the prenylated form of penijanthine. The FAD-linked oxidoreductase ptmO then converts the prenylated form of penijanthine into PC-M5 which is in turn transformed into PC-M4 by the aromatic dimethylallyltransferase ptmE. Five sequential oxidative transformations performed by the cytochrome P450 monooxygenases ptmK, ptmU, ptmL, ptmN and ptmJ yield the various penitrem compounds. PtmK, ptmU and ptmM are involved in the formation of the key bicyclic ring of penitrem C via the formation of the intermediates secopenitrem D and penitrem D. PtmL catalyzes the epoxidation of penitrem D and C to yield penitrem B and F, respectively. PtmJ catalyzes the last benzylic hydroxylation to convert penitrem B to prenitrem E and penitrem F to penitrem A. This chain is Geranylgeranyl pyrophosphate synthase penG, found in Penicillium ochrochloron.